The chain runs to 670 residues: Probable plastid-lipid-associated protein 14, chloroplastic (670 aa).

The N-terminal 52 residues, 1–52, are a transit peptide targeting the chloroplast; that stretch reads MALCGVCSTPNLPNLQVFRSVRNSSIGYKRNHSLWQLRSSSFRAKSVIFHCS. In terms of domain architecture, Protein kinase spans 88-399; it reads FRILDRVSIG…CLDALKHPFL (312 aa).

The protein belongs to the PAP/fibrillin family. In terms of processing, not autophosphorylated. In terms of tissue distribution, expressed in roots.

Its subcellular location is the plastid. The protein localises to the chloroplast. Its function is as follows. Directly regulated by DOF3.6/OBP3; unknown function. This is Probable plastid-lipid-associated protein 14, chloroplastic (PAP14) from Arabidopsis thaliana (Mouse-ear cress).